The primary structure comprises 174 residues: Gamma-crystallin D (174 aa).

Beta/gamma crystallin 'Greek key' domains lie at glycine 2–serine 40 and glycine 41–proline 83. Residues histidine 84 to serine 87 are connecting peptide. Beta/gamma crystallin 'Greek key' domains are found at residues histidine 88–glutamate 128 and glycine 129–isoleucine 171.

It belongs to the beta/gamma-crystallin family. As to quaternary structure, monomer.

In terms of biological role, crystallins are the dominant structural components of the vertebrate eye lens. The protein is Gamma-crystallin D (CRYGD) of Homo sapiens (Human).